The chain runs to 123 residues: MRIQSLLLLGALLAVGSQLPAVFGRKKGEKWGGCPADDGPCLLSVPDQCVEDSQCPLTRKCCYRACFRQCIPRVSVKPGSCPQDQLRCLSPMNHLCHKDSDCSGKKRCCHSACGRDCRDPARG.

A signal peptide spans Met-1–Gly-24. WAP domains lie at Lys-27–Arg-73 and Val-74–Ala-121. Intrachain disulfides connect Cys-34–Cys-62, Cys-41–Cys-66, Cys-49–Cys-61, Cys-55–Cys-70, Cys-81–Cys-109, Cys-88–Cys-113, Cys-96–Cys-108, and Cys-102–Cys-117.

It is found in the secreted. Putative acid-stable proteinase inhibitor. This is WAP four-disulfide core domain protein 5 (WFDC5) from Macaca mulatta (Rhesus macaque).